A 465-amino-acid polypeptide reads, in one-letter code: Cytochrome c peroxidase Ccp (465 aa).

Topologically, residues 1–6 are cytoplasmic; that stretch reads MKMVSR. A helical membrane pass occupies residues 7-27; that stretch reads ITAIGLAGVAICYLGLSGYVW. Residues 28-465 are Periplasmic-facing; it reads YHDNKRSKQA…VYTPYMQDKQ (438 aa). Cytochrome c domains follow at residues 42-155, 185-287, and 337-454; these read SAVS…AKQR, QKVA…EKDP, and AQQK…HSLN. Residues C59, C62, H63, M125, C207, C210, H211, C351, C354, H355, and M429 each contribute to the heme c site.

As to quaternary structure, the recombinant enzyme lacking its transmembrane domain is a monomer in solution. The cofactor is heme c.

It is found in the cell inner membrane. With respect to regulation, does not require reductive activation for maximum activity, as peroxidatic heme is high-spin His/OH(-) 6-coordinated. Calcium ions are needed to attain maximum peroxidase activity. Cytochrome peroxidase that enables anaerobic respiration with H(2)O(2) as a terminal electron acceptor. It receives electrons from the quinol pool. Menaquinol is probably the electron donor in vivo. It can use menadiol (a menaquinol analog), hydroquinone, duroquinol and the artificial electron donor ABTS(2-) in vitro, but only menadiol and hydroquinone can efficiently transfer electrons to Ccp, maintaining the catalytic activity of the enzyme. It enables E.coli to grow on a nonfermentable carbon source when H(2)O(2) is supplied. Plays a role in the peroxide stress response under anaerobic conditions. However, it does not degrade H(2)O(2) quickly enough to lower the periplasmic H(2)O(2) level below that of the surrounding medium and protect the cell from its toxic effects. The protein is Cytochrome c peroxidase Ccp of Escherichia coli (strain K12).